Reading from the N-terminus, the 204-residue chain is Cytochrome c biogenesis ATP-binding export protein CcmA (204 aa).

In terms of domain architecture, ABC transporter spans 2–202 (LEIRNVTCIR…DSNELKKIRL (201 aa)). Residue 34–41 (GQNGAGKT) coordinates ATP.

Belongs to the ABC transporter superfamily. CcmA exporter (TC 3.A.1.107) family. The complex is composed of two ATP-binding proteins (CcmA) and two transmembrane proteins (CcmB).

Its subcellular location is the cell inner membrane. The catalysed reaction is heme b(in) + ATP + H2O = heme b(out) + ADP + phosphate + H(+). In terms of biological role, part of the ABC transporter complex CcmAB involved in the biogenesis of c-type cytochromes; once thought to export heme, this seems not to be the case, but its exact role is uncertain. Responsible for energy coupling to the transport system. This Aliivibrio fischeri (strain ATCC 700601 / ES114) (Vibrio fischeri) protein is Cytochrome c biogenesis ATP-binding export protein CcmA.